A 402-amino-acid polypeptide reads, in one-letter code: Zinc finger protein 322 (402 aa).

The C2H2-type 1; atypical zinc finger occupies 43–65; sequence YQCLECKQNFCENLALIMCERTH. 8 C2H2-type zinc fingers span residues 71-93, 99-121, 127-149, 155-177, 183-205, 211-233, 239-261, and 267-289; these read YKCD…QRIH, YKCS…QRTH, YTCD…QRSH, YLCS…RRTH, FKCL…QRTH, YKCN…KRVH, YKCG…QRVH, and YKCL…QATH. The C2H2-type 10; degenerate zinc-finger motif lies at 293 to 315; that stretch reads FKCLEYEKSFNCSSDLIVHQRIH. The C2H2-type 11; degenerate zinc finger occupies 351–373; sequence YKYTVCDKSFHQSSALLQHQTVH. S391 is subject to Phosphoserine.

This sequence belongs to the krueppel C2H2-type zinc-finger protein family. Interacts with POU5F1.

Its subcellular location is the cytoplasm. The protein localises to the nucleus. Functionally, transcriptional activator. Important for maintenance of pluripotency in embryonic stem cells. Binds directly to the POU5F1 distal enhancer and the NANOG proximal promoter, and enhances expression of both genes. Can also bind to numerous other gene promoters and regulates expression of many other pluripotency factors, either directly or indirectly. Promotes inhibition of MAPK signaling during embryonic stem cell differentiation. In Macaca fascicularis (Crab-eating macaque), this protein is Zinc finger protein 322 (ZNF322).